The following is a 72-amino-acid chain: Excisionase (72 aa).

Its function is as follows. Excisionase and integrase are necessary for the excision of prophage from the host genome by site-specific recombination at the att site. In Enterobacteria phage 434 (Bacteriophage 434), this protein is Excisionase (xis).